An 883-amino-acid chain; its full sequence is Integrator complex subunit 6 (883 aa).

The 225-residue stretch at isoleucine 3 to valine 227 folds into the VWFA domain. The Inhibitory loop signature appears at methionine 625–glutamate 632. The segment at arginine 666–threonine 686 is disordered. Serine 800 carries the phosphoserine modification.

Belongs to the Integrator subunit 6 family. In terms of assembly, component of the Integrator complex, composed of core subunits INTS1, INTS2, INTS3, INTS4, INTS5, INTS6, INTS7, INTS8, INTS9/RC74, INTS10, INTS11/CPSF3L, INTS12, INTS13, INTS14 and INTS15. The core complex associates with protein phosphatase 2A subunits PPP2CA and PPP2R1A, to form the Integrator-PP2A (INTAC) complex.

Its subcellular location is the nucleus. It is found in the chromosome. Its function is as follows. Component of the integrator complex, a multiprotein complex that terminates RNA polymerase II (Pol II) transcription in the promoter-proximal region of genes. The integrator complex provides a quality checkpoint during transcription elongation by driving premature transcription termination of transcripts that are unfavorably configured for transcriptional elongation: the complex terminates transcription by (1) catalyzing dephosphorylation of the C-terminal domain (CTD) of Pol II subunit POLR2A/RPB1 and SUPT5H/SPT5, (2) degrading the exiting nascent RNA transcript via endonuclease activity and (3) promoting the release of Pol II from bound DNA. The integrator complex is also involved in terminating the synthesis of non-coding Pol II transcripts, such as enhancer RNAs (eRNAs), small nuclear RNAs (snRNAs), telomerase RNAs and long non-coding RNAs (lncRNAs). Within the integrator complex, INTS6 acts as a molecular adapter that promotes assembly of protein phosphatase 2A (PP2A) subunits to the integrator core complex, promoting recruitment of PP2A to transcription pause-release checkpoint. Mediates recruitment of cytoplasmic dynein to the nuclear envelope, probably as component of the integrator complex. This is Integrator complex subunit 6 (Ints6) from Mus musculus (Mouse).